Consider the following 146-residue polypeptide: Hemoglobin subunit beta (146 aa).

Val-1 is modified (N-acetylvaline). The Globin domain occupies 2–146; sequence HLTGEEKSAV…VANALAHKYH (145 aa). Residue Thr-12 is modified to Phosphothreonine. A Phosphoserine modification is found at Ser-44. At Lys-59 the chain carries N6-acetyllysine. Heme b is bound at residue His-63. Lys-82 is subject to N6-acetyllysine. Position 92 (His-92) interacts with heme b. At Cys-93 the chain carries S-nitrosocysteine. Lys-144 is modified (N6-acetyllysine).

Belongs to the globin family. Heterotetramer of two alpha chains and two beta chains. Red blood cells.

Its function is as follows. Involved in oxygen transport from the lung to the various peripheral tissues. The chain is Hemoglobin subunit beta (HBB) from Phoca vitulina (Harbor seal).